A 450-amino-acid chain; its full sequence is Molybdate-anion transporter (450 aa).

The next 12 helical transmembrane spans lie at 1-21 (MLVT…GLEL), 38-58 (FLQF…ADWL), 79-99 (ILYV…SSLV), 128-148 (FVLL…FSAF), 167-187 (IPAT…AAGV), 191-211 (AVAS…IPLL), 249-269 (VLLL…FVFL), 278-298 (GAPL…GSSL), 311-331 (PMHL…MLTF), 344-364 (FIAF…MSFL), 376-396 (GVLN…LLVL), and 409-429 (FSIC…LFTV).

Belongs to the major facilitator superfamily.

It is found in the cell membrane. Its function is as follows. Mediates high-affinity intracellular uptake of the rare oligo-element molybdenum. In Mus musculus (Mouse), this protein is Molybdate-anion transporter (Mfsd5).